Reading from the N-terminus, the 204-residue chain is Leucyl/phenylalanyl-tRNA--protein transferase (204 aa).

Belongs to the L/F-transferase family.

The protein resides in the cytoplasm. It carries out the reaction N-terminal L-lysyl-[protein] + L-leucyl-tRNA(Leu) = N-terminal L-leucyl-L-lysyl-[protein] + tRNA(Leu) + H(+). The catalysed reaction is N-terminal L-arginyl-[protein] + L-leucyl-tRNA(Leu) = N-terminal L-leucyl-L-arginyl-[protein] + tRNA(Leu) + H(+). It catalyses the reaction L-phenylalanyl-tRNA(Phe) + an N-terminal L-alpha-aminoacyl-[protein] = an N-terminal L-phenylalanyl-L-alpha-aminoacyl-[protein] + tRNA(Phe). Functionally, functions in the N-end rule pathway of protein degradation where it conjugates Leu, Phe and, less efficiently, Met from aminoacyl-tRNAs to the N-termini of proteins containing an N-terminal arginine or lysine. The chain is Leucyl/phenylalanyl-tRNA--protein transferase from Rhizobium meliloti (strain 1021) (Ensifer meliloti).